A 271-amino-acid chain; its full sequence is Phosphate import ATP-binding protein PstB 1 (271 aa).

The region spanning 25-266 (LTVEHLNLYY…PTQRRTEDYI (242 aa)) is the ABC transporter domain. Position 57–64 (57–64 (GPSGCGKS)) interacts with ATP.

The protein belongs to the ABC transporter superfamily. Phosphate importer (TC 3.A.1.7) family. In terms of assembly, the complex is composed of two ATP-binding proteins (PstB), two transmembrane proteins (PstC and PstA) and a solute-binding protein (PstS).

It localises to the cell inner membrane. The enzyme catalyses phosphate(out) + ATP + H2O = ADP + 2 phosphate(in) + H(+). Part of the ABC transporter complex PstSACB involved in phosphate import. Responsible for energy coupling to the transport system. In Pectobacterium atrosepticum (strain SCRI 1043 / ATCC BAA-672) (Erwinia carotovora subsp. atroseptica), this protein is Phosphate import ATP-binding protein PstB 1.